We begin with the raw amino-acid sequence, 220 residues long: Deoxyribose-phosphate aldolase (220 aa).

D89 functions as the Proton donor/acceptor in the catalytic mechanism. The active-site Schiff-base intermediate with acetaldehyde is K151. K180 serves as the catalytic Proton donor/acceptor.

This sequence belongs to the DeoC/FbaB aldolase family. DeoC type 1 subfamily.

Its subcellular location is the cytoplasm. It carries out the reaction 2-deoxy-D-ribose 5-phosphate = D-glyceraldehyde 3-phosphate + acetaldehyde. Its pathway is carbohydrate degradation; 2-deoxy-D-ribose 1-phosphate degradation; D-glyceraldehyde 3-phosphate and acetaldehyde from 2-deoxy-alpha-D-ribose 1-phosphate: step 2/2. In terms of biological role, catalyzes a reversible aldol reaction between acetaldehyde and D-glyceraldehyde 3-phosphate to generate 2-deoxy-D-ribose 5-phosphate. This Streptococcus equi subsp. equi (strain 4047) protein is Deoxyribose-phosphate aldolase.